Consider the following 188-residue polypeptide: Elongation factor P (188 aa).

K34 bears the N6-(3,6-diaminohexanoyl)-5-hydroxylysine mark.

The protein belongs to the elongation factor P family. In terms of processing, may be beta-lysylated on the epsilon-amino group of Lys-34 by the combined action of EpmA and EpmB, and then hydroxylated on the C5 position of the same residue by EpmC (if this protein is present). Lysylation is critical for the stimulatory effect of EF-P on peptide-bond formation. The lysylation moiety may extend toward the peptidyltransferase center and stabilize the terminal 3-CCA end of the tRNA. Hydroxylation of the C5 position on Lys-34 may allow additional potential stabilizing hydrogen-bond interactions with the P-tRNA.

Its subcellular location is the cytoplasm. It functions in the pathway protein biosynthesis; polypeptide chain elongation. Functionally, involved in peptide bond synthesis. Alleviates ribosome stalling that occurs when 3 or more consecutive Pro residues or the sequence PPG is present in a protein, possibly by augmenting the peptidyl transferase activity of the ribosome. Modification of Lys-34 is required for alleviation. This is Elongation factor P from Methylococcus capsulatus (strain ATCC 33009 / NCIMB 11132 / Bath).